We begin with the raw amino-acid sequence, 199 residues long: MPAIPPKLILASSSRYRRELLSRLRLPFTAISPDVDETPQPGEAPADLALRLSVAKAMAVAATHPGSVVIGSDQVATVDGEPIGKPGGFERAREQLRRLSGRAVEFHSAMAVTDGVHTETADIVTLCRFRTLTDAAIDAYLRAEEPYDTAGSAKAESLGIALMDSIRSDDPTAIIGLPLIALTRMLGRFGLDPLTGHPA.

D73 serves as the catalytic Proton acceptor.

Belongs to the Maf family. YceF subfamily. A divalent metal cation is required as a cofactor.

The protein resides in the cytoplasm. It catalyses the reaction N(7)-methyl-GTP + H2O = N(7)-methyl-GMP + diphosphate + H(+). Its function is as follows. Nucleoside triphosphate pyrophosphatase that hydrolyzes 7-methyl-GTP (m(7)GTP). May have a dual role in cell division arrest and in preventing the incorporation of modified nucleotides into cellular nucleic acids. This is 7-methyl-GTP pyrophosphatase from Bordetella pertussis (strain Tohama I / ATCC BAA-589 / NCTC 13251).